The following is a 65-amino-acid chain: Muscarinic toxin-like protein 2 (65 aa).

Intrachain disulfides connect Cys-3–Cys-24, Cys-17–Cys-42, Cys-46–Cys-57, and Cys-58–Cys-63.

The protein belongs to the three-finger toxin family. Short-chain subfamily. Type C muscarinic toxin sub-subfamily. Monomer. As to expression, expressed by the venom gland.

It is found in the secreted. The sequence is that of Muscarinic toxin-like protein 2 from Naja kaouthia (Monocled cobra).